We begin with the raw amino-acid sequence, 343 residues long: Holliday junction branch migration complex subunit RuvB (343 aa).

Positions 4–193 (TDNLTAAQPQ…FGIVSRLEFY (190 aa)) are large ATPase domain (RuvB-L). ATP contacts are provided by residues Leu32, Arg33, Gly74, Lys77, Thr78, Thr79, 140–142 (EDY), Arg183, Tyr193, and Arg230. Thr78 is a Mg(2+) binding site. The interval 194 to 264 (ENRDLTTIVS…IADAALSMLD (71 aa)) is small ATPAse domain (RuvB-S). Positions 267–343 (AQGLDVMDRK…YLHFGLPVEK (77 aa)) are head domain (RuvB-H). Positions 322 and 327 each coordinate DNA.

The protein belongs to the RuvB family. In terms of assembly, homohexamer. Forms an RuvA(8)-RuvB(12)-Holliday junction (HJ) complex. HJ DNA is sandwiched between 2 RuvA tetramers; dsDNA enters through RuvA and exits via RuvB. An RuvB hexamer assembles on each DNA strand where it exits the tetramer. Each RuvB hexamer is contacted by two RuvA subunits (via domain III) on 2 adjacent RuvB subunits; this complex drives branch migration. In the full resolvosome a probable DNA-RuvA(4)-RuvB(12)-RuvC(2) complex forms which resolves the HJ.

The protein resides in the cytoplasm. The catalysed reaction is ATP + H2O = ADP + phosphate + H(+). The RuvA-RuvB-RuvC complex processes Holliday junction (HJ) DNA during genetic recombination and DNA repair, while the RuvA-RuvB complex plays an important role in the rescue of blocked DNA replication forks via replication fork reversal (RFR). RuvA specifically binds to HJ cruciform DNA, conferring on it an open structure. The RuvB hexamer acts as an ATP-dependent pump, pulling dsDNA into and through the RuvAB complex. RuvB forms 2 homohexamers on either side of HJ DNA bound by 1 or 2 RuvA tetramers; 4 subunits per hexamer contact DNA at a time. Coordinated motions by a converter formed by DNA-disengaged RuvB subunits stimulates ATP hydrolysis and nucleotide exchange. Immobilization of the converter enables RuvB to convert the ATP-contained energy into a lever motion, pulling 2 nucleotides of DNA out of the RuvA tetramer per ATP hydrolyzed, thus driving DNA branch migration. The RuvB motors rotate together with the DNA substrate, which together with the progressing nucleotide cycle form the mechanistic basis for DNA recombination by continuous HJ branch migration. Branch migration allows RuvC to scan DNA until it finds its consensus sequence, where it cleaves and resolves cruciform DNA. This chain is Holliday junction branch migration complex subunit RuvB, found in Neisseria meningitidis serogroup C (strain 053442).